A 326-amino-acid chain; its full sequence is tRNA(Ile)-lysidine synthase (326 aa).

Ser25–Ser30 lines the ATP pocket.

The protein belongs to the tRNA(Ile)-lysidine synthase family.

It localises to the cytoplasm. The catalysed reaction is cytidine(34) in tRNA(Ile2) + L-lysine + ATP = lysidine(34) in tRNA(Ile2) + AMP + diphosphate + H(+). In terms of biological role, ligates lysine onto the cytidine present at position 34 of the AUA codon-specific tRNA(Ile) that contains the anticodon CAU, in an ATP-dependent manner. Cytidine is converted to lysidine, thus changing the amino acid specificity of the tRNA from methionine to isoleucine. The chain is tRNA(Ile)-lysidine synthase from Prochlorococcus marinus (strain NATL1A).